The following is a 373-amino-acid chain: Flagellar P-ring protein (373 aa).

The N-terminal stretch at 1–26 (MKLFFRFVTLVAVLAMSLANVAPAWA) is a signal peptide.

Belongs to the FlgI family. The basal body constitutes a major portion of the flagellar organelle and consists of four rings (L,P,S, and M) mounted on a central rod.

It localises to the periplasm. Its subcellular location is the bacterial flagellum basal body. In terms of biological role, assembles around the rod to form the L-ring and probably protects the motor/basal body from shearing forces during rotation. The protein is Flagellar P-ring protein of Rhizobium johnstonii (strain DSM 114642 / LMG 32736 / 3841) (Rhizobium leguminosarum bv. viciae).